Here is an 806-residue protein sequence, read N- to C-terminus: Phenylalanine--tRNA ligase beta subunit (806 aa).

The region spanning 40-155 is the tRNA-binding domain; it reads NKGVKGVVVG…SDAEVGADAL (116 aa). Positions 409–484 constitute a B5 domain; that stretch reads VQERTVSVTA…RLYGYDHIPV (76 aa). Residues aspartate 462, aspartate 468, glutamate 471, and glutamate 472 each contribute to the Mg(2+) site. In terms of domain architecture, FDX-ACB spans 712–805; it reads PRFPSMTRDM…VEEKFGAELR (94 aa).

Belongs to the phenylalanyl-tRNA synthetase beta subunit family. Type 1 subfamily. Tetramer of two alpha and two beta subunits. Mg(2+) serves as cofactor.

It localises to the cytoplasm. The enzyme catalyses tRNA(Phe) + L-phenylalanine + ATP = L-phenylalanyl-tRNA(Phe) + AMP + diphosphate + H(+). The polypeptide is Phenylalanine--tRNA ligase beta subunit (Bacillus cereus (strain ATCC 14579 / DSM 31 / CCUG 7414 / JCM 2152 / NBRC 15305 / NCIMB 9373 / NCTC 2599 / NRRL B-3711)).